Consider the following 477-residue polypeptide: UDP-N-acetylmuramate--L-alanine ligase (477 aa).

115 to 121 (GTHGKTT) is an ATP binding site.

It belongs to the MurCDEF family.

It is found in the cytoplasm. It carries out the reaction UDP-N-acetyl-alpha-D-muramate + L-alanine + ATP = UDP-N-acetyl-alpha-D-muramoyl-L-alanine + ADP + phosphate + H(+). It functions in the pathway cell wall biogenesis; peptidoglycan biosynthesis. In terms of biological role, cell wall formation. In Gluconobacter oxydans (strain 621H) (Gluconobacter suboxydans), this protein is UDP-N-acetylmuramate--L-alanine ligase.